The primary structure comprises 397 residues: MATDKGLEDIPEGQIESNYDETVDSFDEMNLKPELLRGIYAYGFERPSAIQQRAIMPVIKGHDVIAQAQSGTGKTATFSISVLQKIDPSLKACQALILAPTRELAQQIQKVVVAIGDFMNIECHACIGGTSVRDDMKALQDGPQVVVGTPGRVHDMIQRRFLKTDSMKMFVLDEADEMLSRGFTEQIYDIFQLLPQSTQVVLLSATMPQDVLEVTTKFMREPVRILVKKDELTLEGIKQFYIAVEKEEWKLDTLSDLYETVTITQAVIFCNTRRKVDWLTDKLTARDFTVSAMHGDMDQAQRDLIMKEFRSGSSRVLIATDLLARGIDVQQVSLVINYDLPANRENYIHRIGRGGRFGRKGVAINFVTADDVRMMREIEQFYSTQIEEMPMNVADLI.

The short motif at 24–52 (DSFDEMNLKPELLRGIYAYGFERPSAIQQ) is the Q motif element. Positions 55-225 (IMPVIKGHDV…TKFMREPVRI (171 aa)) constitute a Helicase ATP-binding domain. An ATP-binding site is contributed by 68-75 (AQSGTGKT). Positions 173-176 (DEAD) match the DEAD box motif. The Helicase C-terminal domain occupies 236 to 397 (GIKQFYIAVE…EMPMNVADLI (162 aa)).

The protein belongs to the DEAD box helicase family. eIF4A subfamily. Component of the eIF4F complex, which composition varies with external and internal environmental conditions. It is composed of at least eIF4A, eIF4E and eIF4G.

The protein resides in the cytoplasm. It catalyses the reaction ATP + H2O = ADP + phosphate + H(+). ATP-dependent RNA helicase which is a subunit of the eIF4F complex involved in cap recognition and is required for mRNA binding to ribosome. In the current model of translation initiation, eIF4A unwinds RNA secondary structures in the 5'-UTR of mRNAs which is necessary to allow efficient binding of the small ribosomal subunit, and subsequent scanning for the initiator codon. This Neurospora crassa (strain ATCC 24698 / 74-OR23-1A / CBS 708.71 / DSM 1257 / FGSC 987) protein is ATP-dependent RNA helicase eIF4A (tif-1).